Consider the following 377-residue polypeptide: MANVTGPQMAFYGSGAATFGYPEGMTVADFVPDRVKHMVLDHWYNYPPVNPMWHYLLGVVYLFLGVISIAGNGLVIYLYMKSQALKTPANMLIVNLALSDLIMLTTNFPPFCYNCFSGGRWMFSGTYCEIYAALGAITGVCSIWTLCMISFDRYNIICNGFNGPKLTQGKATFMCGLAWVISVGWSLPPFFGWGSYTLEGILDSCSYDYFTRDMNTITYNICIFIFDFFLPASVIVFSYVFIVKAIFAHEAAMRAQAKKMNVTNLRSNEAETQRAEIRIAKTALVNVSLWFICWTPYAAITIQGLLGNAEGITPLLTTLPALLAKSCSCYNPFVYAISHPKFRLAITQHLPWFCVHEKDPNDVEENQSSNTQTQEKS.

Over 1-53 the chain is Extracellular; sequence MANVTGPQMAFYGSGAATFGYPEGMTVADFVPDRVKHMVLDHWYNYPPVNPMW. The N-linked (GlcNAc...) asparagine glycan is linked to asparagine 3. The chain crosses the membrane as a helical span at residues 54 to 78; the sequence is HYLLGVVYLFLGVISIAGNGLVIYL. Over 79 to 90 the chain is Cytoplasmic; sequence YMKSQALKTPAN. Residues 91–115 traverse the membrane as a helical segment; that stretch reads MLIVNLALSDLIMLTTNFPPFCYNC. Over 116 to 131 the chain is Extracellular; it reads FSGGRWMFSGTYCEIY. Cysteine 128 and cysteine 205 form a disulfide bridge. A helical membrane pass occupies residues 132 to 151; sequence AALGAITGVCSIWTLCMISF. Over 152–170 the chain is Cytoplasmic; it reads DRYNIICNGFNGPKLTQGK. A helical membrane pass occupies residues 171-194; the sequence is ATFMCGLAWVISVGWSLPPFFGWG. Over 195–218 the chain is Extracellular; sequence SYTLEGILDSCSYDYFTRDMNTIT. Residues 219-246 form a helical membrane-spanning segment; it reads YNICIFIFDFFLPASVIVFSYVFIVKAI. Residues 247 to 281 are Cytoplasmic-facing; it reads FAHEAAMRAQAKKMNVTNLRSNEAETQRAEIRIAK. Residues 282 to 305 traverse the membrane as a helical segment; it reads TALVNVSLWFICWTPYAAITIQGL. Residues 306-313 are Extracellular-facing; the sequence is LGNAEGIT. Residues 314–338 form a helical membrane-spanning segment; it reads PLLTTLPALLAKSCSCYNPFVYAIS. Residue lysine 325 is modified to N6-(retinylidene)lysine. The Cytoplasmic portion of the chain corresponds to 339 to 377; it reads HPKFRLAITQHLPWFCVHEKDPNDVEENQSSNTQTQEKS.

It belongs to the G-protein coupled receptor 1 family. Opsin subfamily. Phosphorylated on some or all of the serine and threonine residues present in the C-terminal region. In terms of tissue distribution, expressed in all of the seven retinular cells (R1-R7) forming the main rhabdom in each ommatidium.

The protein localises to the membrane. Functionally, visual pigments are the light-absorbing molecules that mediate vision. They consist of an apoprotein, opsin, covalently linked to cis-retinal. This opsin produces visual pigments with maximal absorption in the blue-green region of the spectrum. The sequence is that of Compound eye opsin BCRH1 from Hemigrapsus sanguineus (Asian shore crab).